A 370-amino-acid chain; its full sequence is tRNA-specific 2-thiouridylase MnmA (370 aa).

Residues 19–26 (AMSGGVDS) and Leu45 each bind ATP. The Nucleophile role is filled by Cys113. Residues Cys113 and Cys209 are joined by a disulfide bond. Gly137 lines the ATP pocket. Residues 159 to 161 (RDQ) form an interaction with tRNA region. Cys209 acts as the Cysteine persulfide intermediate in catalysis.

This sequence belongs to the MnmA/TRMU family.

It is found in the cytoplasm. The catalysed reaction is S-sulfanyl-L-cysteinyl-[protein] + uridine(34) in tRNA + AH2 + ATP = 2-thiouridine(34) in tRNA + L-cysteinyl-[protein] + A + AMP + diphosphate + H(+). In terms of biological role, catalyzes the 2-thiolation of uridine at the wobble position (U34) of tRNA, leading to the formation of s(2)U34. The protein is tRNA-specific 2-thiouridylase MnmA of Zymomonas mobilis subsp. mobilis (strain ATCC 31821 / ZM4 / CP4).